The sequence spans 167 residues: Endoribonuclease YbeY (167 aa).

Positions 126, 130, and 136 each coordinate Zn(2+).

This sequence belongs to the endoribonuclease YbeY family. Zn(2+) is required as a cofactor.

Its subcellular location is the cytoplasm. Its function is as follows. Single strand-specific metallo-endoribonuclease involved in late-stage 70S ribosome quality control and in maturation of the 3' terminus of the 16S rRNA. In Novosphingobium aromaticivorans (strain ATCC 700278 / DSM 12444 / CCUG 56034 / CIP 105152 / NBRC 16084 / F199), this protein is Endoribonuclease YbeY.